Here is a 283-residue protein sequence, read N- to C-terminus: uncharacterized protein (283 aa).

G2 carries the N-myristoyl glycine; by host lipid modification. Residues N31, N95, N105, N108, N137, and N147 are each glycosylated (N-linked (GlcNAc...) asparagine; by host). The next 2 membrane-spanning stretches (helical) occupy residues 181–201 (IIAA…VVYF) and 250–270 (FIVL…LDIP). Residue N277 is glycosylated (N-linked (GlcNAc...) asparagine; by host).

It localises to the membrane. This is an uncharacterized protein from Acanthamoeba polyphaga (Amoeba).